A 163-amino-acid polypeptide reads, in one-letter code: MPSFDIVSEVDLQEARNAVDNASREVESRFDFRNVEYSFELNDASKTIKVLSESDFQVNQLLDILRAKLLKRGIEGSSLDVPENIVHSGKTWFVEAKLKQGIESATQKKIVKMIKDSKLKVQAQIQGDEIRVTGKSRDDLQAVMAMVRGGDLGQPFQFKNFRD.

Belongs to the YajQ family.

Nucleotide-binding protein. The protein is Nucleotide-binding protein YajQ of Shigella flexneri.